Here is a 65-residue protein sequence, read N- to C-terminus: Alpha-like toxin Bom4 (65 aa).

An LCN-type CS-alpha/beta domain is found at 2–64; the sequence is RDAYIAQPEN…VPIRIPGKCH (63 aa). Cystine bridges form between Cys12–Cys63, Cys16–Cys36, Cys22–Cys46, and Cys26–Cys48.

It belongs to the long (4 C-C) scorpion toxin superfamily. Sodium channel inhibitor family. Alpha subfamily. As to expression, expressed by the venom gland.

It is found in the secreted. In terms of biological role, alpha toxins bind voltage-independently at site-3 of sodium channels (Nav) and inhibit the inactivation of the activated channels, thereby blocking neuronal transmission. This alpha-like toxin is highly toxic to mice and insects. The chain is Alpha-like toxin Bom4 from Buthus occitanus mardochei (Moroccan scorpion).